The chain runs to 209 residues: Molybdenum cofactor guanylyltransferase (209 aa).

GTP contacts are provided by residues 13-15, K26, N54, D74, and D104; that span reads LAG. D104 is a Mg(2+) binding site.

The protein belongs to the MobA family. In terms of assembly, monomer. The cofactor is Mg(2+).

It is found in the cytoplasm. It carries out the reaction Mo-molybdopterin + GTP + H(+) = Mo-molybdopterin guanine dinucleotide + diphosphate. Functionally, transfers a GMP moiety from GTP to Mo-molybdopterin (Mo-MPT) cofactor (Moco or molybdenum cofactor) to form Mo-molybdopterin guanine dinucleotide (Mo-MGD) cofactor. The sequence is that of Molybdenum cofactor guanylyltransferase from Acinetobacter baumannii (strain ACICU).